The primary structure comprises 475 residues: Cytosolic non-specific dipeptidase (475 aa).

Ala2 is modified (N-acetylalanine). At Lys9 the chain carries N6-acetyllysine. Phosphoserine is present on Ser58. A Mn(2+)-binding site is contributed by His99. Residue Asp101 is part of the active site. Asp132 lines the Mn(2+) pocket. Glu166 serves as the catalytic Proton acceptor. Substrate contacts are provided by residues 166-167, Asp195, and His228; that span reads EE. Residues Glu167 and Asp195 each coordinate Mn(2+). At Ser299 the chain carries Phosphoserine. Thr330, Arg343, Ser417, and His445 together coordinate substrate. A Mn(2+)-binding site is contributed by His445.

It belongs to the peptidase M20A family. In terms of assembly, homodimer. Requires Mn(2+) as cofactor. In terms of tissue distribution, ubiquitously expressed with higher levels in kidney and liver (at protein level). Expressed in peripheral blood leukocytes. Expressed in gastric mucosa and down-regulated in gastric cancer mucosal tissues (at protein level). Broadly expressed in fetal tissues. Expressed in adult liver and placenta.

Its subcellular location is the cytoplasm. The catalysed reaction is Hydrolysis of dipeptides, preferentially hydrophobic dipeptides including prolyl amino acids.. It carries out the reaction L-threonyl-L-threonine + H2O = 2 L-threonine. It catalyses the reaction L-threonyl-L-serine + H2O = L-threonine + L-serine. The enzyme catalyses L-seryl-L-threonine + H2O = L-threonine + L-serine. The catalysed reaction is L-cysteinylglycine + H2O = L-cysteine + glycine. It carries out the reaction L-alanyl-L-cysteine + H2O = L-cysteine + L-alanine. It catalyses the reaction (S)-lactate + L-phenylalanine = N-[(S)-lactoyl]-L-phenylalanine + H2O. Inhibited by p-hydroxymercurybenzoate. The inhibitory concentration 50% (IC(50)) is 13 uM. Inhibited by bestatin. The inhibitory concentration 50% (IC(50)) is 7 nM at pH 9.5. Its function is as follows. Catalyzes the peptide bond hydrolysis in dipeptides, displaying a non-redundant activity toward threonyl dipeptides. Mediates threonyl dipeptide catabolism in a tissue-specific way. Has high dipeptidase activity toward cysteinylglycine, an intermediate metabolite in glutathione metabolism. Metabolizes N-lactoyl-amino acids, both through hydrolysis to form lactic acid and amino acids, as well as through their formation by reverse proteolysis. Plays a role in the regulation of cell cycle arrest and apoptosis. This is Cytosolic non-specific dipeptidase from Homo sapiens (Human).